The following is a 275-amino-acid chain: NH(3)-dependent NAD(+) synthetase (275 aa).

Residue 50 to 57 participates in ATP binding; sequence GISGGVDS. Aspartate 56 is a binding site for Mg(2+). Arginine 147 is a binding site for deamido-NAD(+). Position 167 (threonine 167) interacts with ATP. Glutamate 172 contributes to the Mg(2+) binding site. Residues lysine 180 and aspartate 187 each coordinate deamido-NAD(+). The ATP site is built by lysine 196 and threonine 218. 267–268 is a binding site for deamido-NAD(+); that stretch reads HK.

This sequence belongs to the NAD synthetase family. In terms of assembly, homodimer.

The catalysed reaction is deamido-NAD(+) + NH4(+) + ATP = AMP + diphosphate + NAD(+) + H(+). Its pathway is cofactor biosynthesis; NAD(+) biosynthesis; NAD(+) from deamido-NAD(+) (ammonia route): step 1/1. Functionally, catalyzes the ATP-dependent amidation of deamido-NAD to form NAD. Uses ammonia as a nitrogen source. This is NH(3)-dependent NAD(+) synthetase from Pseudomonas entomophila (strain L48).